The following is a 186-amino-acid chain: PRKR-interacting protein 1 (186 aa).

The interval 1 to 50 is interaction with EIF2AK2; that stretch reads MASSAASSVRPPRPKKEPQALIIPKNAAEEQKLKLERLMKNPDKAVPIPE. Disordered stretches follow at residues 39–61 and 119–186; these read MKNP…RPPP and AAEE…ITGR. Positions 51–143 are required for RNA-binding; that stretch reads KMSEWAPRPP…LKEKKLLAKK (93 aa). Residues 86 to 153 adopt a coiled-coil conformation; that stretch reads RRREYQRQDY…MKLEQKKQSE (68 aa). A required for nuclear localization region spans residues 126-138; it reads KRRKKRQKLKEKK. A compositionally biased stretch (basic residues) spans 126-143; it reads KRRKKRQKLKEKKLLAKK. Residues 153 to 162 show a composition bias toward polar residues; that stretch reads EASSETQEQP. Residues 170–179 are compositionally biased toward acidic residues; sequence SGTEDEEEDA.

It belongs to the PRKRIP1 family. In terms of assembly, component of the pre-catalytic and post-catalytic spliceosome complexes. Interacts with EIF2AK2.

It localises to the nucleus. The protein resides in the nucleolus. In terms of biological role, required for pre-mRNA splicing as component of the spliceosome. Binds double-stranded RNA. Inhibits EIF2AK2 kinase activity. The sequence is that of PRKR-interacting protein 1 (PRKRIP1) from Bos taurus (Bovine).